The following is a 204-amino-acid chain: Large ribosomal subunit protein uL13 (204 aa).

The protein belongs to the universal ribosomal protein uL13 family.

This Choristoneura parallela (Spotted fireworm moth) protein is Large ribosomal subunit protein uL13 (RpL13A).